The chain runs to 188 residues: MASDLTPHAGMAGRATVPGYDPKKHDPFFDGVSDALADKGFVVAAADDLVTWARTGSLMWMTFGLACCAVEMMQASMPRYDVERFGFAPRASPRQSDVMIVAGTLTNKMAPALRKVYDQMPEPRYVISMGSCANGGGYYHYSYSVVRGCDRIVPVDIYVPGCPPTAEALVYGILQLQKKIRREGSIER.

[4Fe-4S] cluster contacts are provided by Cys-67, Cys-68, Cys-132, and Cys-162.

Belongs to the complex I 20 kDa subunit family. In terms of assembly, NDH-1 is composed of 14 different subunits. Subunits NuoB, C, D, E, F, and G constitute the peripheral sector of the complex. It depends on [4Fe-4S] cluster as a cofactor.

The protein localises to the cell inner membrane. The catalysed reaction is a quinone + NADH + 5 H(+)(in) = a quinol + NAD(+) + 4 H(+)(out). In terms of biological role, NDH-1 shuttles electrons from NADH, via FMN and iron-sulfur (Fe-S) centers, to quinones in the respiratory chain. Couples the redox reaction to proton translocation (for every two electrons transferred, four hydrogen ions are translocated across the cytoplasmic membrane), and thus conserves the redox energy in a proton gradient. The sequence is that of NADH-quinone oxidoreductase subunit B from Maricaulis maris (strain MCS10) (Caulobacter maris).